The chain runs to 233 residues: H-2 class II histocompatibility antigen, A-F alpha chain (233 aa).

The alpha-1 stretch occupies residues 1–88 (EDDIEADHVG…KRSNFTPATN (88 aa)). Over 1–195 (EDDIEADHVG…IPAPMSELTE (195 aa)) the chain is Extracellular. The tract at residues 89 to 182 (EAPQATVFPK…GLEEPVLKHW (94 aa)) is alpha-2. The region spanning 91 to 183 (PQATVFPKSP…LEEPVLKHWE (93 aa)) is the Ig-like C1-type domain. Cys-111 and Cys-167 are joined by a disulfide. N-linked (GlcNAc...) asparagine glycosylation is present at Asn-122. The interval 183–195 (EPEIPAPMSELTE) is connecting peptide. The helical transmembrane segment at 196 to 221 (TVVCALGLSVGLVGIVVGTIFIIQGL) threads the bilayer. Over 222–233 (RSGGTSRHPGPL) the chain is Cytoplasmic.

The protein belongs to the MHC class II family.

It localises to the membrane. This Mus musculus (Mouse) protein is H-2 class II histocompatibility antigen, A-F alpha chain (H2-Aa).